A 205-amino-acid polypeptide reads, in one-letter code: Guanylate kinase (205 aa).

Residues 5 to 184 enclose the Guanylate kinase-like domain; it reads GLLIVLSGPS…AVQKIKGIVE (180 aa). An ATP-binding site is contributed by 12–19; that stretch reads GPSGVGKG.

This sequence belongs to the guanylate kinase family.

Its subcellular location is the cytoplasm. The catalysed reaction is GMP + ATP = GDP + ADP. Functionally, essential for recycling GMP and indirectly, cGMP. The polypeptide is Guanylate kinase (Listeria innocua serovar 6a (strain ATCC BAA-680 / CLIP 11262)).